The chain runs to 220 residues: Adapter protein MecA (220 aa).

The protein belongs to the MecA family. In terms of assembly, homodimer.

Functionally, enables the recognition and targeting of unfolded and aggregated proteins to the ClpC protease or to other proteins involved in proteolysis. In Macrococcus caseolyticus (strain JCSC5402) (Macrococcoides caseolyticum), this protein is Adapter protein MecA.